Here is a 545-residue protein sequence, read N- to C-terminus: Chaperonin GroEL (545 aa).

ATP-binding positions include 30 to 33 (TMGP), Lys51, 87 to 91 (DGTTT), Gly416, 479 to 481 (NAA), and Asp495.

It belongs to the chaperonin (HSP60) family. As to quaternary structure, forms a cylinder of 14 subunits composed of two heptameric rings stacked back-to-back. Interacts with the co-chaperonin GroES.

The protein resides in the cytoplasm. It carries out the reaction ATP + H2O + a folded polypeptide = ADP + phosphate + an unfolded polypeptide.. Functionally, together with its co-chaperonin GroES, plays an essential role in assisting protein folding. The GroEL-GroES system forms a nano-cage that allows encapsulation of the non-native substrate proteins and provides a physical environment optimized to promote and accelerate protein folding. The chain is Chaperonin GroEL from Nautilia profundicola (strain ATCC BAA-1463 / DSM 18972 / AmH).